The primary structure comprises 212 residues: Uridine kinase (212 aa).

12 to 19 (GGSGGGKT) is a binding site for ATP.

It belongs to the uridine kinase family.

It is found in the cytoplasm. The enzyme catalyses uridine + ATP = UMP + ADP + H(+). It carries out the reaction cytidine + ATP = CMP + ADP + H(+). It participates in pyrimidine metabolism; CTP biosynthesis via salvage pathway; CTP from cytidine: step 1/3. Its pathway is pyrimidine metabolism; UMP biosynthesis via salvage pathway; UMP from uridine: step 1/1. This is Uridine kinase from Streptococcus pneumoniae serotype 19F (strain G54).